The chain runs to 427 residues: Enolase (427 aa).

Residue glutamine 163 participates in (2R)-2-phosphoglycerate binding. The Proton donor role is filled by glutamate 205. 3 residues coordinate Mg(2+): aspartate 242, glutamate 285, and aspartate 312. (2R)-2-phosphoglycerate-binding residues include lysine 337, arginine 366, serine 367, and lysine 388. Residue lysine 337 is the Proton acceptor of the active site.

It belongs to the enolase family. The cofactor is Mg(2+).

It localises to the cytoplasm. The protein localises to the secreted. Its subcellular location is the cell surface. The enzyme catalyses (2R)-2-phosphoglycerate = phosphoenolpyruvate + H2O. Its pathway is carbohydrate degradation; glycolysis; pyruvate from D-glyceraldehyde 3-phosphate: step 4/5. In terms of biological role, catalyzes the reversible conversion of 2-phosphoglycerate (2-PG) into phosphoenolpyruvate (PEP). It is essential for the degradation of carbohydrates via glycolysis. The protein is Enolase of Paraburkholderia phytofirmans (strain DSM 17436 / LMG 22146 / PsJN) (Burkholderia phytofirmans).